A 310-amino-acid chain; its full sequence is Transcription factor UNE12 (310 aa).

Disordered stretches follow at residues 124–156 and 229–253; these read HGQPMQQPPPSAPHQPTSIRPRVRARRGQATDP and SSSVEDETGEGGRTPQPAWEKWSND. A bHLH domain is found at 152–201; the sequence is QATDPHSIAERLRRERIAERIRALQELVPTVNKTDRAAMIDEIVDYVKFL.

As to quaternary structure, homodimer. As to expression, expressed constitutively in roots, leaves, stems, and flowers.

Its subcellular location is the nucleus. Required for ovule fertilization. This Arabidopsis thaliana (Mouse-ear cress) protein is Transcription factor UNE12 (UNE12).